The sequence spans 262 residues: Small ribosomal subunit protein uS2 (262 aa).

Residues 228–262 are disordered; sequence VSNEEVAAEQNIDLDESKEATEAETTEENTSVESN.

The protein belongs to the universal ribosomal protein uS2 family.

This chain is Small ribosomal subunit protein uS2, found in Staphylococcus saprophyticus subsp. saprophyticus (strain ATCC 15305 / DSM 20229 / NCIMB 8711 / NCTC 7292 / S-41).